We begin with the raw amino-acid sequence, 1785 residues long: Brefeldin A-inhibited guanine nucleotide-exchange protein 2 (1785 aa).

Residue Met1 is modified to N-acetylmethionine. The DCB; DCB:DCB domain and DCB:HUS domain interaction stretch occupies residues Gln2–Ala224. Ser214, Ser218, and Ser227 each carry phosphoserine. The segment at Arg232–Ala285 is disordered. Thr244 bears the Phosphothreonine mark. Residues Thr244–Ser260 are compositionally biased toward basic and acidic residues. A phosphoserine mark is found at Ser277, Ser348, and Ser349. Residues Ala508–Asn528 form an HUS; DCB:HUS domain interaction region. Phosphoserine is present on Ser614. Thr616 is modified (phosphothreonine). The residue at position 617 (Ser617) is a Phosphoserine. Thr626 bears the Phosphothreonine mark. Positions Phe654–Ser785 constitute an SEC7 domain. Ser700, Ser1511, Ser1513, Ser1514, Ser1525, Ser1528, Ser1534, and Ser1782 each carry phosphoserine. Residues Ser1514 to Asp1532 are compositionally biased toward polar residues. Residues Ser1514–Trp1535 form a disordered region.

In terms of assembly, homodimer. Interacts with ARFGEF1/BIG1; both proteins are probably part of the same or very similar macromolecular complexes. Interacts with PRKAR1A, PRKAR2A, PRKAR1B, PRKAR2B, PPP1CC, PDE3A, TNFRSF1A, MYCBP and EXOC7. Interacts with GABRB1, GABRB2 and GABRB3. In vitro phosphorylated by PKA reducing its GEF activity and dephosphorylated by phosphatase PP1. Expressed in placenta, lung, heart, brain, kidney and pancreas.

Its subcellular location is the cytoplasm. It localises to the membrane. The protein localises to the golgi apparatus. It is found in the perinuclear region. The protein resides in the trans-Golgi network. Its subcellular location is the endosome. It localises to the cytoskeleton. The protein localises to the microtubule organizing center. It is found in the centrosome. The protein resides in the cell projection. Its subcellular location is the dendrite. It localises to the cytoplasmic vesicle. The protein localises to the synapse. With respect to regulation, inhibited by brefeldin A. Functionally, promotes guanine-nucleotide exchange on ARF1 and ARF3 and to a lower extent on ARF5 and ARF6. Promotes the activation of ARF1/ARF5/ARF6 through replacement of GDP with GTP. Involved in the regulation of Golgi vesicular transport. Required for the integrity of the endosomal compartment. Involved in trafficking from the trans-Golgi network (TGN) to endosomes and is required for membrane association of the AP-1 complex and GGA1. Seems to be involved in recycling of the transferrin receptor from recycling endosomes to the plasma membrane. Probably is involved in the exit of GABA(A) receptors from the endoplasmic reticulum. Involved in constitutive release of tumor necrosis factor receptor 1 via exosome-like vesicles; the function seems to involve PKA and specifically PRKAR2B. Proposed to act as A kinase-anchoring protein (AKAP) and may mediate crosstalk between Arf and PKA pathways. In Homo sapiens (Human), this protein is Brefeldin A-inhibited guanine nucleotide-exchange protein 2 (ARFGEF2).